The sequence spans 535 residues: Phosphoenolpyruvate carboxykinase (ATP) (535 aa).

The substrate site is built by arginine 59, tyrosine 201, and lysine 207. ATP-binding positions include lysine 207, histidine 226, and 243–251; that span reads GLSGTGKTT. Mn(2+) is bound by residues lysine 207 and histidine 226. Aspartate 264 provides a ligand contact to Mn(2+). ATP contacts are provided by residues glutamate 292, arginine 328, 444 to 445, and threonine 450; that span reads RI. Arginine 328 lines the substrate pocket.

This sequence belongs to the phosphoenolpyruvate carboxykinase (ATP) family. The cofactor is Mn(2+).

The protein resides in the cytoplasm. It carries out the reaction oxaloacetate + ATP = phosphoenolpyruvate + ADP + CO2. The protein operates within carbohydrate biosynthesis; gluconeogenesis. Its function is as follows. Involved in the gluconeogenesis. Catalyzes the conversion of oxaloacetate (OAA) to phosphoenolpyruvate (PEP) through direct phosphoryl transfer between the nucleoside triphosphate and OAA. This Bacteroides fragilis (strain ATCC 25285 / DSM 2151 / CCUG 4856 / JCM 11019 / LMG 10263 / NCTC 9343 / Onslow / VPI 2553 / EN-2) protein is Phosphoenolpyruvate carboxykinase (ATP).